The primary structure comprises 216 residues: Probable GTP-binding protein EngB (216 aa).

The region spanning 26–210 is the EngB-type G domain; it reads PMATIIFAGR…KNRIFEVIRE (185 aa). Residues 34–41, 59–63, 76–79, 156–159, and 189–191 each bind GTP; these read GRSNVGKS, GVTRK, DMPG, NKLD, and ISA. 2 residues coordinate Mg(2+): Ser41 and Thr61.

This sequence belongs to the TRAFAC class TrmE-Era-EngA-EngB-Septin-like GTPase superfamily. EngB GTPase family. It depends on Mg(2+) as a cofactor.

Functionally, necessary for normal cell division and for the maintenance of normal septation. This Pyrococcus horikoshii (strain ATCC 700860 / DSM 12428 / JCM 9974 / NBRC 100139 / OT-3) protein is Probable GTP-binding protein EngB.